The following is a 156-amino-acid chain: ATP synthase subunit b (156 aa).

Residues 7-29 (LLGQAIAFFFFVTFCMKYVWPPL) traverse the membrane as a helical segment.

It belongs to the ATPase B chain family. F-type ATPases have 2 components, F(1) - the catalytic core - and F(0) - the membrane proton channel. F(1) has five subunits: alpha(3), beta(3), gamma(1), delta(1), epsilon(1). F(0) has three main subunits: a(1), b(2) and c(10-14). The alpha and beta chains form an alternating ring which encloses part of the gamma chain. F(1) is attached to F(0) by a central stalk formed by the gamma and epsilon chains, while a peripheral stalk is formed by the delta and b chains.

Its subcellular location is the cell inner membrane. In terms of biological role, f(1)F(0) ATP synthase produces ATP from ADP in the presence of a proton or sodium gradient. F-type ATPases consist of two structural domains, F(1) containing the extramembraneous catalytic core and F(0) containing the membrane proton channel, linked together by a central stalk and a peripheral stalk. During catalysis, ATP synthesis in the catalytic domain of F(1) is coupled via a rotary mechanism of the central stalk subunits to proton translocation. Functionally, component of the F(0) channel, it forms part of the peripheral stalk, linking F(1) to F(0). This chain is ATP synthase subunit b, found in Photobacterium profundum (strain SS9).